The sequence spans 354 residues: Ubiquinol oxidase 1a, mitochondrial (354 aa).

Residues 1–62 (MMITRGGAKA…RAPTIGGMRF (62 aa)) constitute a mitochondrion transit peptide. The interval 68-99 (LGEKTPMKEEDANQKKTENESTGGDAAGGNNK) is disordered. A compositionally biased stretch (basic and acidic residues) spans 72-86 (TPMKEEDANQKKTEN). The chain crosses the membrane as a helical span at residues 179–199 (AMMLETVAAVPGMVGGMLLHC). Positions 183, 222, and 225 each coordinate Fe cation. A helical membrane pass occupies residues 241-261 (ALVITVQGVFFNAYFLGYLIS). Glu273, Glu324, and His327 together coordinate Fe cation.

The protein belongs to the alternative oxidase family. As to quaternary structure, homodimer; disulfide-linked. The cofactor is Fe cation. As to expression, expressed in roots, stems, cotyledons, leaves and flowers. High expression in sepals.

The protein localises to the mitochondrion inner membrane. It catalyses the reaction 2 a ubiquinol + O2 = 2 a ubiquinone + 2 H2O. With respect to regulation, when the two monomeric subunits are covalently linked by a S-S bond, the enzyme is essentially inactive. When the disulfide bond is reduced, its component sulfhydryls can associate with K-keto acids through formation of a thiohemiacetal, resulting in enzyme activation. Activated by glyoxylate, irrespective to the substitution found at Cys-127. That suggests the presence of a second activation site, possibly Cys-177. Catalyzes the cyanide-resistant oxidation of ubiquinol and the reduction of molecular oxygen to water, but does not translocate protons and consequently is not linked to oxidative phosphorylation. Increases respiration when the cytochrome respiratory pathway is restricted, or in response to low temperatures. The sequence is that of Ubiquinol oxidase 1a, mitochondrial (AOX1A) from Arabidopsis thaliana (Mouse-ear cress).